The primary structure comprises 434 residues: Gamma-glutamyl phosphate reductase (434 aa).

It belongs to the gamma-glutamyl phosphate reductase family.

Its subcellular location is the cytoplasm. The enzyme catalyses L-glutamate 5-semialdehyde + phosphate + NADP(+) = L-glutamyl 5-phosphate + NADPH + H(+). It functions in the pathway amino-acid biosynthesis; L-proline biosynthesis; L-glutamate 5-semialdehyde from L-glutamate: step 2/2. In terms of biological role, catalyzes the NADPH-dependent reduction of L-glutamate 5-phosphate into L-glutamate 5-semialdehyde and phosphate. The product spontaneously undergoes cyclization to form 1-pyrroline-5-carboxylate. The protein is Gamma-glutamyl phosphate reductase of Nostoc sp. (strain PCC 7120 / SAG 25.82 / UTEX 2576).